Consider the following 450-residue polypeptide: 23S rRNA (uracil(1939)-C(5))-methyltransferase RlmD (450 aa).

The disordered stretch occupies residues 1–22 (MAKHDRGLRFQPAGGSRAPQIP). Residues 20–78 (QIPVGKKQRLTIQRLANDGRGIAFVEGRTWFVSGALAGEEVEARVLGSHGKVVEARAER) form the TRAM domain. The [4Fe-4S] cluster site is built by Cys91, Cys97, Cys100, and Cys179. S-adenosyl-L-methionine contacts are provided by Gln283, Phe312, Asn317, Glu333, Asp360, and Asp381. Cys407 acts as the Nucleophile in catalysis.

It belongs to the class I-like SAM-binding methyltransferase superfamily. RNA M5U methyltransferase family. RlmD subfamily.

The catalysed reaction is uridine(1939) in 23S rRNA + S-adenosyl-L-methionine = 5-methyluridine(1939) in 23S rRNA + S-adenosyl-L-homocysteine + H(+). Catalyzes the formation of 5-methyl-uridine at position 1939 (m5U1939) in 23S rRNA. This is 23S rRNA (uracil(1939)-C(5))-methyltransferase RlmD from Pseudomonas fluorescens (strain ATCC BAA-477 / NRRL B-23932 / Pf-5).